Here is a 378-residue protein sequence, read N- to C-terminus: 4-hydroxy-3-methylbut-2-en-1-yl diphosphate synthase (flavodoxin) (378 aa).

Positions 268, 271, 303, and 310 each coordinate [4Fe-4S] cluster.

The protein belongs to the IspG family. [4Fe-4S] cluster is required as a cofactor.

It catalyses the reaction (2E)-4-hydroxy-3-methylbut-2-enyl diphosphate + oxidized [flavodoxin] + H2O + 2 H(+) = 2-C-methyl-D-erythritol 2,4-cyclic diphosphate + reduced [flavodoxin]. Its pathway is isoprenoid biosynthesis; isopentenyl diphosphate biosynthesis via DXP pathway; isopentenyl diphosphate from 1-deoxy-D-xylulose 5-phosphate: step 5/6. Functionally, converts 2C-methyl-D-erythritol 2,4-cyclodiphosphate (ME-2,4cPP) into 1-hydroxy-2-methyl-2-(E)-butenyl 4-diphosphate. The polypeptide is 4-hydroxy-3-methylbut-2-en-1-yl diphosphate synthase (flavodoxin) (Corynebacterium efficiens (strain DSM 44549 / YS-314 / AJ 12310 / JCM 11189 / NBRC 100395)).